Reading from the N-terminus, the 96-residue chain is Small ribosomal subunit protein bS6 (96 aa).

The protein belongs to the bacterial ribosomal protein bS6 family.

Binds together with bS18 to 16S ribosomal RNA. In Corynebacterium aurimucosum (strain ATCC 700975 / DSM 44827 / CIP 107346 / CN-1) (Corynebacterium nigricans), this protein is Small ribosomal subunit protein bS6.